Consider the following 735-residue polypeptide: ATP-dependent RNA helicase dbp4 (735 aa).

The interval 1–24 (MPKNRTGRSREAREKKRKEEEEEI) is disordered. Residues 8-19 (RSREAREKKRKE) show a composition bias toward basic and acidic residues. The Q motif motif lies at 39-67 (DHFAELPLTQPTKSALKNAHFITLTEIQK). One can recognise a Helicase ATP-binding domain in the interval 70 to 244 (IPSALKGRDI…RLSLQNPDFI (175 aa)). 83-90 (AKTGSGKT) contacts ATP. The short motif at 192 to 195 (DEAD) is the DEAD box element. The region spanning 270-424 (KLDILFGFIR…GKKTSIRNQL (155 aa)) is the Helicase C-terminal domain. A disordered region spans residues 483–513 (GKLKNHSQSQKDYNSSTSLDSSEESEVDVEN). 4 positions are modified to phosphoserine: S500, S503, S504, and S545. The segment at 652–712 (KQLEKKRRRQ…DNDERDHGGI (61 aa)) is disordered. Over residues 692–711 (ETSKKQKKWFEDNDERDHGG) the composition is skewed to basic and acidic residues.

Belongs to the DEAD box helicase family. DDX10/DBP4 subfamily. In terms of assembly, interacts with the U3 and U14 snoRNAs. Associates with pre-ribosomal complexes.

It localises to the nucleus. The protein resides in the nucleolus. It carries out the reaction ATP + H2O = ADP + phosphate + H(+). Its function is as follows. ATP-dependent RNA helicase required for ribosome biogenesis. Involved in the release of U14 snoRNA in pre-ribosomal complexes. Required for pre-rRNA cleavage at site A2. In Schizosaccharomyces pombe (strain 972 / ATCC 24843) (Fission yeast), this protein is ATP-dependent RNA helicase dbp4 (dbp4).